The primary structure comprises 236 residues: MENISKTSVIIVAAGKGKRMGRDYNKQYIQLEAQPIVAHTIKVFEEMDCINEIILVVGAGEVEFLKKSIIEVYGFQKVSAIVEGGLERRDSVYNGLKAVSQDCSIVLIHDGARPLITKDIIEESIIVAKESGACIAAVPVKDTIKISNDNMEVIHTPKRDNLWSVQTPQTFQYDLILEAYNHQQPKDSTATDDAMILEALGHTVKIIHGSYNNIKITTPEDLIVAEEILKTRREGR.

It belongs to the IspD/TarI cytidylyltransferase family. IspD subfamily.

It catalyses the reaction 2-C-methyl-D-erythritol 4-phosphate + CTP + H(+) = 4-CDP-2-C-methyl-D-erythritol + diphosphate. The protein operates within isoprenoid biosynthesis; isopentenyl diphosphate biosynthesis via DXP pathway; isopentenyl diphosphate from 1-deoxy-D-xylulose 5-phosphate: step 2/6. In terms of biological role, catalyzes the formation of 4-diphosphocytidyl-2-C-methyl-D-erythritol from CTP and 2-C-methyl-D-erythritol 4-phosphate (MEP). This Alkaliphilus oremlandii (strain OhILAs) (Clostridium oremlandii (strain OhILAs)) protein is 2-C-methyl-D-erythritol 4-phosphate cytidylyltransferase.